The primary structure comprises 223 residues: Phosphoribosylformylglycinamidine synthase subunit PurQ (223 aa).

The Glutamine amidotransferase type-1 domain occupies phenylalanine 3 to valine 223. The Nucleophile role is filled by cysteine 85. Residues histidine 193 and glutamate 195 contribute to the active site.

As to quaternary structure, part of the FGAM synthase complex composed of 1 PurL, 1 PurQ and 2 PurS subunits.

It localises to the cytoplasm. The catalysed reaction is N(2)-formyl-N(1)-(5-phospho-beta-D-ribosyl)glycinamide + L-glutamine + ATP + H2O = 2-formamido-N(1)-(5-O-phospho-beta-D-ribosyl)acetamidine + L-glutamate + ADP + phosphate + H(+). It catalyses the reaction L-glutamine + H2O = L-glutamate + NH4(+). It functions in the pathway purine metabolism; IMP biosynthesis via de novo pathway; 5-amino-1-(5-phospho-D-ribosyl)imidazole from N(2)-formyl-N(1)-(5-phospho-D-ribosyl)glycinamide: step 1/2. Functionally, part of the phosphoribosylformylglycinamidine synthase complex involved in the purines biosynthetic pathway. Catalyzes the ATP-dependent conversion of formylglycinamide ribonucleotide (FGAR) and glutamine to yield formylglycinamidine ribonucleotide (FGAM) and glutamate. The FGAM synthase complex is composed of three subunits. PurQ produces an ammonia molecule by converting glutamine to glutamate. PurL transfers the ammonia molecule to FGAR to form FGAM in an ATP-dependent manner. PurS interacts with PurQ and PurL and is thought to assist in the transfer of the ammonia molecule from PurQ to PurL. The sequence is that of Phosphoribosylformylglycinamidine synthase subunit PurQ from Staphylococcus aureus (strain bovine RF122 / ET3-1).